A 339-amino-acid polypeptide reads, in one-letter code: BTB/POZ domain-containing protein KCTD9 (339 aa).

Residues 3–82 (RVTLFLNGSP…PQTDARPPGG (80 aa)) form the KHA domain. Phosphoserine is present on S11. Positions 89–161 (DWLTLNVGGR…LRHGQLIVND (73 aa)) constitute a BTB domain. 3 consecutive Pentapeptide repeat domains span residues 223–247 (ANLQ…NFED), 253–292 (ANLE…NLRG), and 293–327 (ATLA…IFEE).

In terms of assembly, forms pentamers. Component of a complex mades of five KCTD9 and five CUL3 subunits.

It functions in the pathway protein modification; protein ubiquitination. Its function is as follows. Substrate-specific adapter of a BCR (BTB-CUL3-RBX1) E3 ubiquitin-protein ligase complex, which mediates the ubiquitination of target proteins, leading to their degradation by the proteasome. This is BTB/POZ domain-containing protein KCTD9 (Kctd9) from Mus musculus (Mouse).